A 347-amino-acid polypeptide reads, in one-letter code: MEEQLIPIQWKDDALVLLDQTLLPNEVVYESFNTAEGVWDAIQVMKVRGAPAIGVSAAYGVYLGVKEFVESTEAEFIDEVKRVCAYLATSRPTAVNLFWALERMESVATDHTHLSITQLKDRLLEEAKEIHREDEEINRQIGEHALTLFHDGMGVLTHCNAGALATTKYGTATAPMYLAKEKGWDLKIYSDETRPRLQGSTLTALELQRAGIDVTVITDNMAAMVMSQGKIDAVIVGCDRVAANGDVANKIGTLGVSILAKYYNIPFYVAAPTPTIDLKTPTGKEIPIEERDASEVINRFGQYSAPKESKVYNPAFDVTPHENVTAIITEKGIVKAPFTENLKKLFQ.

Residues Arg-48–Ala-50, Arg-91, and Gln-198 contribute to the substrate site. Catalysis depends on Asp-239, which acts as the Proton donor. Residue Asn-249–Lys-250 coordinates substrate.

Belongs to the EIF-2B alpha/beta/delta subunits family. DrdI subfamily.

It catalyses the reaction 5-deoxy-alpha-D-ribose 1-phosphate = 5-deoxy-D-ribulose 1-phosphate. It functions in the pathway carbohydrate degradation. Functionally, catalyzes the isomerization of 5-deoxy-alpha-D-ribose 1-phosphate to 5-deoxy-D-ribulose 1-phosphate, as part of a 5-deoxyribose salvage pathway that recycles this toxic radical SAM enzyme by-product to mainstream metabolites. In Bacillus thuringiensis (strain Al Hakam), this protein is 5-deoxyribose 1-phosphate isomerase.